The primary structure comprises 507 residues: Protein O-glucosyltransferase 3 (507 aa).

A signal peptide spans methionine 1–alanine 20. A Filamin repeat occupies glutamate 24–glycine 134. N-linked (GlcNAc...) asparagine glycosylation is found at asparagine 61 and asparagine 306. The Prevents secretion from ER motif lies at arginine 504–leucine 507.

It belongs to the KDELC family.

The protein localises to the endoplasmic reticulum lumen. It catalyses the reaction L-seryl-[EGF-like domain protein] + UDP-alpha-D-glucose = 3-O-(beta-D-glucosyl)-L-seryl-[EGF-like domain protein] + UDP + H(+). The enzyme catalyses L-seryl-[EGF-like domain protein] + UDP-alpha-D-xylose = 3-O-(beta-D-xylosyl)-L-seryl-[EGF-like domain protein] + UDP + H(+). It participates in protein modification; protein glycosylation. In terms of biological role, protein glucosyltransferase that catalyzes the transfer of glucose from UDP-glucose to a serine residue within the consensus sequence peptide C-X-N-T-X-G-S-F-X-C. Can also catalyze the transfer of xylose from UDP-xylose but less efficiently. Specifically targets extracellular EGF repeats of proteins such as NOTCH1, NOTCH3, FBN1, FBN2 and LTBP1. May regulate the transport of NOTCH1 and NOTCH3 to the plasma membrane and thereby the Notch signaling pathway. The protein is Protein O-glucosyltransferase 3 of Homo sapiens (Human).